A 223-amino-acid chain; its full sequence is Small heat shock protein hspI, mitochondrial (223 aa).

The transit peptide at 1–23 (MYKLSKTTPFFFRRAFLCGRRGG) directs the protein to the mitochondrion. Residues 109–223 (KTRGFRSPKT…YVKSTTINVQ (115 aa)) form the sHSP domain.

Belongs to the small heat shock protein (HSP20) family.

The protein localises to the mitochondrion. The sequence is that of Small heat shock protein hspI, mitochondrial (hspI) from Dictyostelium discoideum (Social amoeba).